The primary structure comprises 105 residues: UPF0235 protein RT0827 (105 aa).

It belongs to the UPF0235 family.

This chain is UPF0235 protein RT0827, found in Rickettsia typhi (strain ATCC VR-144 / Wilmington).